The primary structure comprises 299 residues: Acetaldehyde dehydrogenase (299 aa).

11 to 14 is an NAD(+) binding site; sequence SGNI. Cys126 (acyl-thioester intermediate) is an active-site residue. NAD(+) contacts are provided by residues 157-165 and Asn267; that span reads SAGPGTRAN.

Belongs to the acetaldehyde dehydrogenase family.

It catalyses the reaction acetaldehyde + NAD(+) + CoA = acetyl-CoA + NADH + H(+). The polypeptide is Acetaldehyde dehydrogenase (Bacillus cereus (strain ATCC 10987 / NRS 248)).